The following is a 402-amino-acid chain: Multidrug resistance protein MdtH (402 aa).

The Cytoplasmic portion of the chain corresponds to 1 to 12 (MSRVSQARNLGK). The helical transmembrane segment at 13 to 33 (YFLLIDNMLVVLGFFVVFPLI) threads the bilayer. Residues 34-98 (SIRFVDQMGW…GFATMGIAHE (65 aa)) are Periplasmic-facing. The helical transmembrane segment at 99–116 (PWLLWFSCFLSGLGGTLF) threads the bilayer. The Cytoplasmic segment spans residues 117–138 (DPPRSALVVKLIRPEQRGRFFS). Residues 139-159 (LLMMQDSAGAVIGALLGSWLL) traverse the membrane as a helical segment. The Periplasmic portion of the chain corresponds to 160 to 164 (QYDFR). Residues 165-185 (LVCATGAILFILCALFNAWLL) traverse the membrane as a helical segment. Over 186 to 213 (PAWKLSTVRTPVREGMRRVMSDKRFVTY) the chain is Cytoplasmic. A helical membrane pass occupies residues 214–234 (VLTLAGYYMLAVQVMLMLPIM). Residues 235 to 243 (VNDIAGSPA) lie on the Periplasmic side of the membrane. Residues 244 to 264 (AVKWMYAIEACLSLTLLYPIA) form a helical membrane-spanning segment. The Cytoplasmic segment spans residues 265 to 276 (RWSEKRFRLEHR). The helical transmembrane segment at 277–297 (LMAGLLVMSLSMIPIGMVGNL) threads the bilayer. Topologically, residues 298-299 (QQ) are periplasmic. A helical membrane pass occupies residues 300–320 (LFTLICAFYIGSVIAEPARET). Over 321–339 (LSASLADARARGSYMGFSR) the chain is Cytoplasmic. The helical transmembrane segment at 340 to 360 (LGLAIGGAIGYIGGGWLFDMG) threads the bilayer. At 361–367 (KALTQPE) the chain is on the periplasmic side. The helical transmembrane segment at 368-388 (LPWMMLGIIGFITFLALGWQF) threads the bilayer. Residues 389–402 (SHKRTPRRMLEPGA) lie on the Cytoplasmic side of the membrane.

The protein belongs to the major facilitator superfamily. DHA1 family. MdtH (TC 2.A.1.2.21) subfamily.

It localises to the cell inner membrane. This is Multidrug resistance protein MdtH from Salmonella paratyphi B (strain ATCC BAA-1250 / SPB7).